Consider the following 295-residue polypeptide: Tyrosine recombinase XerD (295 aa).

The region spanning 1–85 (METIIEEYLK…TIRSFHQFAL (85 aa)) is the Core-binding (CB) domain. The 184-residue stretch at 106–289 (KLPDVLDVEE…SKTQIRQMYN (184 aa)) folds into the Tyr recombinase domain. Catalysis depends on residues R146, K170, H241, R244, and H267. The O-(3'-phospho-DNA)-tyrosine intermediate role is filled by Y276.

It belongs to the 'phage' integrase family. XerD subfamily. As to quaternary structure, forms a cyclic heterotetrameric complex composed of two molecules of XerC and two molecules of XerD.

It is found in the cytoplasm. Functionally, site-specific tyrosine recombinase, which acts by catalyzing the cutting and rejoining of the recombining DNA molecules. The XerC-XerD complex is essential to convert dimers of the bacterial chromosome into monomers to permit their segregation at cell division. It also contributes to the segregational stability of plasmids. This is Tyrosine recombinase XerD from Staphylococcus haemolyticus (strain JCSC1435).